The following is a 238-amino-acid chain: 1-(5-phosphoribosyl)-5-[(5-phosphoribosylamino)methylideneamino] imidazole-4-carboxamide isomerase (238 aa).

Residue Asp8 is the Proton acceptor of the active site. Catalysis depends on Asp129, which acts as the Proton donor.

The protein belongs to the HisA/HisF family.

It localises to the cytoplasm. The enzyme catalyses 1-(5-phospho-beta-D-ribosyl)-5-[(5-phospho-beta-D-ribosylamino)methylideneamino]imidazole-4-carboxamide = 5-[(5-phospho-1-deoxy-D-ribulos-1-ylimino)methylamino]-1-(5-phospho-beta-D-ribosyl)imidazole-4-carboxamide. It participates in amino-acid biosynthesis; L-histidine biosynthesis; L-histidine from 5-phospho-alpha-D-ribose 1-diphosphate: step 4/9. This chain is 1-(5-phosphoribosyl)-5-[(5-phosphoribosylamino)methylideneamino] imidazole-4-carboxamide isomerase, found in Clostridium novyi (strain NT).